The sequence spans 262 residues: Zinc finger protein ehn-3 (262 aa).

4 consecutive C2H2-type zinc fingers follow at residues 2 to 24, 30 to 52, 59 to 84, and 92 to 115; these read EKCD…KVMH, FECQ…MMTH, FECP…DSEH, and AKCK…HTAH. Residues 179–204 are disordered; the sequence is SVKSAKELSPTPSTEIETPEEEELDG. The segment covering 185-194 has biased composition (low complexity); it reads ELSPTPSTEI. Over residues 195–204 the composition is skewed to acidic residues; it reads ETPEEEELDG. 2 C2H2-type zinc fingers span residues 208 to 230 and 236 to 260; these read WYCD…SGLH and FKCS…YANH.

Belongs to the krueppel C2H2-type zinc-finger protein family.

The protein localises to the nucleus. In terms of biological role, together with the zinc finger protein ztf-16, plays a role in gonadogenesis, specifically in somatic gonad precursor cell development. This is possibly by regulating tra-1 gene expression. Required for proper gonadal primordium assembly and somatic gonad precursor cell morphology. The sequence is that of Zinc finger protein ehn-3 from Caenorhabditis elegans.